Consider the following 111-residue polypeptide: Cytochrome bo(3) ubiquinol oxidase subunit 4 (111 aa).

At 1-17 the chain is on the cytoplasmic side; it reads MSSAAHDNHGAGHGSLG. A helical membrane pass occupies residues 18–38; it reads SYAIGFVLSVILTAIPFYMVM. Topologically, residues 39–46 are periplasmic; sequence DGGFSRHA. Residues 47–67 form a helical membrane-spanning segment; the sequence is TILTMVVLGLVQVVVHLICFL. Over 68–80 the chain is Cytoplasmic; that stretch reads HMNMSSEGRWNVM. The chain crosses the membrane as a helical span at residues 81–101; it reads AFIFTVIVILLVVGLSLWIIF. The Periplasmic segment spans residues 102–111; sequence SADMLMMPMP.

This sequence belongs to the cytochrome c oxidase bacterial subunit 4 family. As to quaternary structure, heterooctamer of two A chains, two B chains, two C chains and two D chains.

It is found in the cell inner membrane. Cytochrome bo(3) ubiquinol terminal oxidase is the component of the aerobic respiratory chain of E.coli that predominates when cells are grown at high aeration. Has proton pump activity across the membrane in addition to electron transfer, pumping 2 protons/electron. The sequence is that of Cytochrome bo(3) ubiquinol oxidase subunit 4 (cyoD) from Pseudomonas aeruginosa (strain ATCC 15692 / DSM 22644 / CIP 104116 / JCM 14847 / LMG 12228 / 1C / PRS 101 / PAO1).